The chain runs to 555 residues: MNPESASCPDRHFFGPASSRMTVNGTIYPIEVGMRKVALKRTYECKGEPFNSMPLYDTSGPFGDPNGEHDVRKGLEPVRDRWGFDNGSAESTKGELSMSERKPRVAKSGEAVTQMHFARKGVITPEMEYVAIRENQALEEWIEKCGGKPVTPEMVRDEVAKGRAIIPANINHPEIEPMIIGRNFRVKINANIGNSALGSSIDEEVEKAVWACRWGADTVMDLSTGKNIHQTREWILRNSPVPIGTVPLYQALEKVGGKAEELSWEVYRDTLVEQAEQGVDYFTIHSGILAATLPDAEARQTGIVSRGGSIMARWCRAHNQENFLFTHFDDICDILRSYDVAVSLGDALRPGSIGDANDAAQFGELKTLGELTLRAWERDVQVMIEGPGHVPLHMIRENMELQLKHCHEAPFYTLGPLVTDVAAGYDHINSAIGGTLIASLGCSMLCYVTPKEHLGLPDRDDVREGVIVHRVAAHAADLAKGSHTAWLRDELMSKARYAFEWEDQFSLALDPLKTRQIHAQNIAATGDTAATAKFCTMCGPDFCSMKRSQETTAGM.

The disordered stretch occupies residues 78 to 104 (VRDRWGFDNGSAESTKGELSMSERKPR). Substrate contacts are provided by residues Asn191, Met220, Tyr249, His285, 305-307 (SRG), 346-349 (DALR), and Glu385. His389 provides a ligand contact to Zn(2+). Tyr412 serves as a coordination point for substrate. Residue His453 coordinates Zn(2+). Residues Cys535, Cys538, and Cys543 each contribute to the [4Fe-4S] cluster site.

This sequence belongs to the ThiC family. It depends on [4Fe-4S] cluster as a cofactor.

It catalyses the reaction 5-amino-1-(5-phospho-beta-D-ribosyl)imidazole + S-adenosyl-L-methionine = 4-amino-2-methyl-5-(phosphooxymethyl)pyrimidine + CO + 5'-deoxyadenosine + formate + L-methionine + 3 H(+). It participates in cofactor biosynthesis; thiamine diphosphate biosynthesis. In terms of biological role, catalyzes the synthesis of the hydroxymethylpyrimidine phosphate (HMP-P) moiety of thiamine from aminoimidazole ribotide (AIR) in a radical S-adenosyl-L-methionine (SAM)-dependent reaction. The polypeptide is Phosphomethylpyrimidine synthase (Chlorobaculum parvum (strain DSM 263 / NCIMB 8327) (Chlorobium vibrioforme subsp. thiosulfatophilum)).